A 29-amino-acid chain; its full sequence is Serum amyloid P-component (29 aa).

Positions 6 to 29 constitute a Pentraxin (PTX) domain; it reads LGKVFVFSKESNVDDVKLLTPQTE.

The protein belongs to the pentraxin family. As to quaternary structure, homopentamer. Pentraxin (or pentaxin) have a discoid arrangement of 5 non-covalently bound subunits. The cofactor is Ca(2+).

The protein resides in the secreted. In Hippoglossus hippoglossus (Atlantic halibut), this protein is Serum amyloid P-component.